Here is a 257-residue protein sequence, read N- to C-terminus: Nickel import system ATP-binding protein NikD (257 aa).

In terms of domain architecture, ABC transporter spans 4-245 (IDIQNLTIKN…HLHPYTERLI (242 aa)). 37-44 (GESGAGKS) provides a ligand contact to ATP.

The protein belongs to the ABC transporter superfamily. In terms of assembly, the complex is composed of two ATP-binding proteins (NikD and NikE), two transmembrane proteins (NikB and NikC) and a solute-binding protein (NikA).

It localises to the cell membrane. It catalyses the reaction Ni(2+)(out) + ATP + H2O = Ni(2+)(in) + ADP + phosphate + H(+). Functionally, part of the ABC transporter complex NikABCDE (Opp2) involved in nickel import. Probably responsible for energy coupling to the transport system. This is Nickel import system ATP-binding protein NikD from Staphylococcus aureus (strain MSSA476).